The primary structure comprises 303 residues: D-alanine--D-alanine ligase (303 aa).

The region spanning 100-295 (KQLLRRHGIL…FPALIARLIE (196 aa)) is the ATP-grasp domain. 127–180 (GLGYPLFVKPNTGGSSLCLSRVTQPEGLAPALEAVFAHCGEAIVEPAIPGVEVT) serves as a coordination point for ATP. Residues aspartate 249, glutamate 262, and asparagine 264 each contribute to the Mg(2+) site.

It belongs to the D-alanine--D-alanine ligase family. The cofactor is Mg(2+). It depends on Mn(2+) as a cofactor.

It is found in the cytoplasm. The catalysed reaction is 2 D-alanine + ATP = D-alanyl-D-alanine + ADP + phosphate + H(+). Its pathway is cell wall biogenesis; peptidoglycan biosynthesis. In terms of biological role, cell wall formation. This chain is D-alanine--D-alanine ligase, found in Nitratidesulfovibrio vulgaris (strain DP4) (Desulfovibrio vulgaris).